We begin with the raw amino-acid sequence, 492 residues long: GPI alpha-1,6-mannosyltransferase 2 (492 aa).

The Cytoplasmic portion of the chain corresponds to 1–13 (MGLLDPSQKEVLK). The chain crosses the membrane as a helical span at residues 14–34 (FAVSCRILTLVLQALFNIIIP). Residues 35–77 (DHHADAFSPPRLAPSGSVDQLVEALLGGLSRWDAEHFLFIAEH) lie on the Lumenal side of the membrane. Residues 78 to 98 (GYLYEHNFAFFPGFPLALLMG) form a helical membrane-spanning segment. Residues 99 to 113 (TELLRPLQGLLSERS) are Cytoplasmic-facing. The chain crosses the membrane as a helical span at residues 114–134 (CLLVSVALLNSLFSVLAAVAL). The Lumenal segment spans residues 135–136 (HD). The helical transmembrane segment at 137 to 157 (LGCLVLHCPRQAFCAALLFCL) threads the bilayer. At 158–161 (SPAN) the chain is on the cytoplasmic side. A helical membrane pass occupies residues 162 to 182 (VFLAAGYSEALFAFLTFSAMG). Residues 183 to 192 (QLERGRGWAS) lie on the Lumenal side of the membrane. Residues 193–213 (GLLFALAAGVRSNGLVSVGFL) form a helical membrane-spanning segment. Topologically, residues 214–234 (LHSQCRGFCSSLVVLDPLKGL) are cytoplasmic. A helical membrane pass occupies residues 235–255 (VKLMASLCLSVLTVSLPFALF). Residues 256-327 (QYYAYTQFCF…RYYELRQVPN (72 aa)) are Lumenal-facing. The helical transmembrane segment at 328-348 (FLLATPVTVLVVWATWTYVTA) threads the bilayer. Topologically, residues 349 to 378 (HPWLCLTLGLQRTKDRESLEKPHPGFLSAK) are cytoplasmic. Residues 379 to 399 (VFVYLVHAAALLAFGGLCMHV) form a helical membrane-spanning segment. Topologically, residues 400 to 468 (QVLTRLLGSS…NWKTCSPVTK (69 aa)) are lumenal. A helical membrane pass occupies residues 469–489 (CILVYFLTYWLLGLIMHCNFL). Topologically, residues 490-492 (PWT) are cytoplasmic.

This sequence belongs to the PIGV family. Post-translationally, not N-glycosylated.

It localises to the endoplasmic reticulum membrane. The protein operates within glycolipid biosynthesis; glycosylphosphatidylinositol-anchor biosynthesis. Its function is as follows. Alpha-1,6-mannosyltransferase that catalyzes the transfer of the second mannose, via an alpha-1,6 bond, from a dolichol-phosphate-mannose (Dol-P-Man) to the alpha-D-Man-(1-&gt;4)-alpha-D-GlcN-(1-&gt;6)-(1-radyl,2-acyl-sn-glycero-3-phospho)-2-acyl-inositol (also termed H2) intermediate to generate an alpha-D-Man-(1-&gt;6)-alpha-D-Man-(1-&gt;4)-alpha-D-GlcN-(1-&gt;6)-(1-radyl,2-acyl-sn-glycero-3-phospho)-2-acyl-inositol (also termed H3) and participates in the seventh step of the glycosylphosphatidylinositol-anchor biosynthesis. Also transfers the second mannose on a 2-PEtn-alpha-D-Man-(1-&gt;4)-alpha-D-GlcN-(1-&gt;6)-(1-radyl,2-acyl-sn-glycero-3-phospho)-2-acyl-inositol (also termed H5). The sequence is that of GPI alpha-1,6-mannosyltransferase 2 from Rattus norvegicus (Rat).